The following is a 103-amino-acid chain: Large ribosomal subunit protein bL21 (103 aa).

This sequence belongs to the bacterial ribosomal protein bL21 family. Part of the 50S ribosomal subunit. Contacts protein L20.

Functionally, this protein binds to 23S rRNA in the presence of protein L20. The protein is Large ribosomal subunit protein bL21 of Shewanella frigidimarina (strain NCIMB 400).